The primary structure comprises 640 residues: Pro-neuregulin-1, membrane-bound isoform (640 aa).

The propeptide occupies 1–19 (MSERKEGRGKGKGKKKERG). A disordered region spans residues 1 to 53 (MSERKEGRGKGKGKKKERGSGKKPESAAGSQSPALPPRLKEMKSQESAAGSKL). Residues 20 to 242 (SGKKPESAAG…EKAEELYQKR (223 aa)) lie on the Extracellular side of the membrane. One can recognise an Ig-like C2-type domain in the interval 37–128 (PRLKEMKSQE…GNDSASANIT (92 aa)). Cysteines 57 and 112 form a disulfide. N-linked (GlcNAc...) asparagine glycans are attached at residues Asn120, Asn126, and Asn164. Residues 178–222 (HLVKCAEKEKTFCVNGGECFMVKDLSNPSRYLCKCQPGFTGARCT) form the EGF-like domain. Disulfide bonds link Cys182–Cys196, Cys190–Cys210, and Cys212–Cys221. Residues 243-265 (VLTITGICIALLVVGIMCVVAYC) traverse the membrane as a helical segment. Over 266 to 640 (KTKKQRKKLH…VIANQDPIAV (375 aa)) the chain is Cytoplasmic. Positions 334 to 350 (TSHYTSTAHHSTTVTQT) are enriched in low complexity. 4 disordered regions span residues 334–360 (TSHY…NGHT), 375–399 (SVEN…GGPR), 433–461 (RMSP…SMTV), and 524–588 (EYET…DTPF). Polar residues predominate over residues 351–360 (PSHSWSNGHT). Residues 387 to 397 (GPRGRLNGTGG) are compositionally biased toward gly residues. A compositionally biased stretch (basic residues) spans 542–552 (ANSRRAKRTKP). The segment covering 563–574 (DSNTSSQSSNSE) has biased composition (low complexity).

Belongs to the neuregulin family. The cytoplasmic domain interacts with the LIM domain region of LIMK1. Forms a ternary complex with ERBB3 and ITGAV:ITGB3 or ITGA6:ITGB4. Interacts with NRDC and BACE1. Proteolytic cleavage close to the plasma membrane on the external face leads to the release of the soluble growth factor form. In terms of processing, N- and O-glycosylated. Extensive glycosylation precedes the proteolytic cleavage. In terms of tissue distribution, type I isoforms are the predominant forms expressed in the endocardium. Isoform alpha is expressed in breast, ovary, testis, prostate, heart, skeletal muscle, lung, placenta liver, kidney, salivary gland, small intestine and brain, but not in uterus, stomach, pancreas, and spleen. Isoform 3 is the predominant form in mesenchymal cells and in non-neuronal organs, whereas isoform 6 is the major neuronal form. Isoform 8 is expressed in spinal cord and brain. Isoform 9 is the major form in skeletal muscle cells; in the nervous system it is expressed in spinal cord and brain. Also detected in adult heart, placenta, lung, liver, kidney, and pancreas. Isoform 10 is expressed in nervous system: spinal cord motor neurons, dorsal root ganglion neurons, and brain. Predominant isoform expressed in sensory and motor neurons. Not detected in adult heart, placenta, lung, liver, skeletal muscle, kidney, and pancreas. Not expressed in fetal lung, liver and kidney. Type IV isoforms are brain-specific.

The protein resides in the cell membrane. It is found in the secreted. It localises to the nucleus. Its subcellular location is the membrane. Its function is as follows. Direct ligand for ERBB3 and ERBB4 tyrosine kinase receptors. Concomitantly recruits ERBB1 and ERBB2 coreceptors, resulting in ligand-stimulated tyrosine phosphorylation and activation of the ERBB receptors. The multiple isoforms perform diverse functions such as inducing growth and differentiation of epithelial, glial, neuronal, and skeletal muscle cells; inducing expression of acetylcholine receptor in synaptic vesicles during the formation of the neuromuscular junction; stimulating lobuloalveolar budding and milk production in the mammary gland and inducing differentiation of mammary tumor cells; stimulating Schwann cell proliferation; implication in the development of the myocardium such as trabeculation of the developing heart. Isoform 10 may play a role in motor and sensory neuron development. Binds to ERBB4. Binds to ERBB3. Acts as a ligand for integrins and binds (via EGF domain) to integrins ITGAV:ITGB3 or ITGA6:ITGB4. Its binding to integrins and subsequent ternary complex formation with integrins and ERRB3 are essential for NRG1-ERBB signaling. Induces the phosphorylation and activation of MAPK3/ERK1, MAPK1/ERK2 and AKT1. Ligand-dependent ERBB4 endocytosis is essential for the NRG1-mediated activation of these kinases in neurons. This is Pro-neuregulin-1, membrane-bound isoform (NRG1) from Homo sapiens (Human).